The chain runs to 354 residues: Protein RecA (354 aa).

ATP is bound at residue 67–74 (GPESSGKT).

It belongs to the RecA family.

The protein resides in the cytoplasm. In terms of biological role, can catalyze the hydrolysis of ATP in the presence of single-stranded DNA, the ATP-dependent uptake of single-stranded DNA by duplex DNA, and the ATP-dependent hybridization of homologous single-stranded DNAs. It interacts with LexA causing its activation and leading to its autocatalytic cleavage. The chain is Protein RecA from Chlamydia muridarum (strain MoPn / Nigg).